The chain runs to 71 residues: Prokaryotic ubiquitin-like protein Pup (71 aa).

Low complexity predominate over residues 1 to 18 (MATRDSGGQSQTGRSQQG). Residues 1 to 42 (MATRDSGGQSQTGRSQQGEEIEDVTTEASAEAAERHAEITED) are disordered. Residues 27 to 65 (EASAEAAERHAEITEDVDDLLDEIDSVLEENAEEFVRGY) are ARC ATPase binding. The stretch at 29–60 (SAEAAERHAEITEDVDDLLDEIDSVLEENAEE) forms a coiled coil. An Isoglutamyl lysine isopeptide (Glu-Lys) (interchain with K-? in acceptor proteins) cross-link involves residue Glu71.

The protein belongs to the prokaryotic ubiquitin-like protein family. Strongly interacts with the proteasome-associated ATPase ARC through a hydrophobic interface; the interacting region of Pup lies in its C-terminal half. There is one Pup binding site per ARC hexamer ring.

The protein operates within protein degradation; proteasomal Pup-dependent pathway. Its function is as follows. Protein modifier that is covalently attached to lysine residues of substrate proteins, thereby targeting them for proteasomal degradation. The tagging system is termed pupylation. The sequence is that of Prokaryotic ubiquitin-like protein Pup from Salinispora tropica (strain ATCC BAA-916 / DSM 44818 / JCM 13857 / NBRC 105044 / CNB-440).